Here is a 210-residue protein sequence, read N- to C-terminus: Protein-L-isoaspartate O-methyltransferase (210 aa).

Residue S60 is part of the active site.

It belongs to the methyltransferase superfamily. L-isoaspartyl/D-aspartyl protein methyltransferase family.

Its subcellular location is the cytoplasm. It carries out the reaction [protein]-L-isoaspartate + S-adenosyl-L-methionine = [protein]-L-isoaspartate alpha-methyl ester + S-adenosyl-L-homocysteine. Catalyzes the methyl esterification of L-isoaspartyl residues in peptides and proteins that result from spontaneous decomposition of normal L-aspartyl and L-asparaginyl residues. It plays a role in the repair and/or degradation of damaged proteins. This Xylella fastidiosa (strain M12) protein is Protein-L-isoaspartate O-methyltransferase.